The primary structure comprises 348 residues: MDKTYTIAIDAMGGDNAPEEIVKGALLARDKYKNLHLNLYGDKGKILELIGETKQDRIKIINTTEMIEMGEEPVKAVRKKKDSSMVVATNAVKGGSADALFSAGNTGALLASGIFIVGRISGIERPGLLTVLPSVDDPKRQWVFMDVGANAEVKPSYLYQFAVLGNFYATHVLKKPNPEVKLLNNGTEEDKGDKIHIQAYQLLKNGKQLNFTGNIESRELLNGHADVVVADGFSGNAALKAIEGTALTMFAGLRKILVNGSLKTKIGAALVKPALKEFSSVLDYNNAGGAVIAGVKAPVVKTHGSAKAKTVSNTIGQIKIMLESNLVPDITKYVDENKDQFKIILEEK.

Belongs to the PlsX family. In terms of assembly, homodimer. Probably interacts with PlsY.

The protein localises to the cytoplasm. It carries out the reaction a fatty acyl-[ACP] + phosphate = an acyl phosphate + holo-[ACP]. It functions in the pathway lipid metabolism; phospholipid metabolism. In terms of biological role, catalyzes the reversible formation of acyl-phosphate (acyl-PO(4)) from acyl-[acyl-carrier-protein] (acyl-ACP). This enzyme utilizes acyl-ACP as fatty acyl donor, but not acyl-CoA. The polypeptide is Phosphate acyltransferase (Oenococcus oeni (strain ATCC BAA-331 / PSU-1)).